We begin with the raw amino-acid sequence, 319 residues long: Cell division protein FtsN (319 aa).

A disordered region spans residues 1–30 (MAQRDYVRRSQPAPSRRKKSTSRKKQRNLP). Over 1–33 (MAQRDYVRRSQPAPSRRKKSTSRKKQRNLPAVS) the chain is Cytoplasmic. A mediates interaction with FtsA region spans residues 4–6 (RDY). Residues 15–27 (SRRKKSTSRKKQR) are compositionally biased toward basic residues. A helical membrane pass occupies residues 34–54 (PAMVAIAAAVLVTFIGGLYFI). Residues 55-319 (THHKKEESET…TNCIRLAAGG (265 aa)) lie on the Periplasmic side of the membrane. Disordered stretches follow at residues 60–79 (EESETLQSQKVTGNGLPPKP) and 89–113 (LESRQPGVRAPTEPSAGGEVKTPEQ). A run of 4 repeats spans residues 115–120 (TPEQRQ), 145–150 (TPEQRQ), 197–200 (QSKP), and 220–223 (QSKP). The interval 115-150 (TPEQRQLLEQMQADMRQQPTQLVEVPWNEQTPEQRQ) is 2 X 6 AA repeats. The tract at residues 140 to 245 (PWNEQTPEQR…PKPTAEKKDE (106 aa)) is disordered. The span at 143 to 171 (EQTPEQRQQTLQRQRQAQQLAEQQRLAQQ) shows a compositional bias: low complexity. Polar residues predominate over residues 172–221 (SRTTEQSWQQQTRTSQAAPVQAQPRQSKPASSQQPYQDLLQTPAHTTAQS). The segment at 197 to 223 (QSKPASSQQPYQDLLQTPAHTTAQSKP) is 2 X 4 AA repeats. Over residues 222 to 238 (KPQQAAPVARAADAPKP) the composition is skewed to low complexity. The SPOR domain maps to 242 to 316 (KKDERRWMVQ…AGHTNCIRLA (75 aa)). Cys252 and Cys312 are oxidised to a cystine.

It belongs to the FtsN family. As to quaternary structure, interacts with FtsA via its N-terminal cytoplasmic domain. Interacts with ZapA, FtsQ, FtsW and FtsI.

The protein localises to the cell inner membrane. Its function is as follows. Essential cell division protein that activates septal peptidoglycan synthesis and constriction of the cell. Acts on both sides of the membrane, via interaction with FtsA in the cytoplasm and interaction with the FtsQBL complex in the periplasm. These interactions may induce a conformational switch in both FtsA and FtsQBL, leading to septal peptidoglycan synthesis by FtsI and associated synthases. Required for full FtsI activity. Required for recruitment of AmiC to the septal ring. In Escherichia coli (strain K12), this protein is Cell division protein FtsN.